The sequence spans 275 residues: MQVFETIGAFRAALTAYPTLGFVPTMGFLHEGHLGLVRRAKAENGAVAVSIFVNPTQFGPNEDYASYPRDPDRDLALLKEAGADLVFLPTPDVLYPPGAVTRIEVGGVANELEGQSRPGHFSGVATVVTKLFNIVQPQRAYFGQKDAQQCAVVRRFVADLDIPVEIVVCDIAREADGLARSSRNVRLTAENRQKAPALFQALQETAGLFRNGERDVDILENAMRAVLTEAGLLDIDYATVVNADTFRREQPCSDNALALLAVQAGEVRLIDNMPL.

Position 26-33 (26-33) interacts with ATP; that stretch reads MGFLHEGH. The active-site Proton donor is the H33. Q57 is a binding site for (R)-pantoate. Q57 contributes to the beta-alanine binding site. 143–146 contacts ATP; that stretch reads GQKD. Position 149 (Q149) interacts with (R)-pantoate. ATP-binding positions include A172 and 180 to 183; that span reads RSSR.

The protein belongs to the pantothenate synthetase family. In terms of assembly, homodimer.

The protein resides in the cytoplasm. It carries out the reaction (R)-pantoate + beta-alanine + ATP = (R)-pantothenate + AMP + diphosphate + H(+). Its pathway is cofactor biosynthesis; (R)-pantothenate biosynthesis; (R)-pantothenate from (R)-pantoate and beta-alanine: step 1/1. In terms of biological role, catalyzes the condensation of pantoate with beta-alanine in an ATP-dependent reaction via a pantoyl-adenylate intermediate. The polypeptide is Pantothenate synthetase (Gluconobacter oxydans (strain 621H) (Gluconobacter suboxydans)).